The primary structure comprises 142 residues: Large ribosomal subunit protein uL13 (142 aa).

Belongs to the universal ribosomal protein uL13 family. Part of the 50S ribosomal subunit.

In terms of biological role, this protein is one of the early assembly proteins of the 50S ribosomal subunit, although it is not seen to bind rRNA by itself. It is important during the early stages of 50S assembly. The sequence is that of Large ribosomal subunit protein uL13 from Opitutus terrae (strain DSM 11246 / JCM 15787 / PB90-1).